Here is a 303-residue protein sequence, read N- to C-terminus: NAC domain-containing protein 48 (303 aa).

The 151-residue stretch at 9 to 159 folds into the NAC domain; it reads LPPGFRFHPT…DWVLCRIYNK (151 aa).

As to quaternary structure, interacts with NAC071. In terms of tissue distribution, widely expressed.

It localises to the nucleus. In terms of biological role, transcription activator that binds to the promoter of the stress response gene LEA19. Involved in tolerance to abiotic stresses. Transcription activator involved in response to abiotic and biotic stresses. Involved in drought and salt stress responses, and defense response to the rice blast fungus. Transcription activator involved tolerance to cold and salt stresses. Transcription activator involved in tolerance to drought stress. Targets directly and activates genes involved in membrane modification, nicotianamine (NA) biosynthesis, glutathione relocation, accumulation of phosphoadenosine phosphosulfate and glycosylation in roots. Controls root growth at early vegetative stage through chromatin modification and histone lysine deacytaltion by HDAC1. In Oryza sativa subsp. japonica (Rice), this protein is NAC domain-containing protein 48.